The following is a 189-amino-acid chain: Large ribosomal subunit protein eL18 (189 aa).

This sequence belongs to the eukaryotic ribosomal protein eL18 family.

It localises to the cytoplasm. This chain is Large ribosomal subunit protein eL18 (RpL18), found in Drosophila pseudoobscura pseudoobscura (Fruit fly).